Consider the following 290-residue polypeptide: 33 kDa chaperonin (290 aa).

Cystine bridges form between Cys235-Cys237 and Cys268-Cys271.

It belongs to the HSP33 family. Post-translationally, under oxidizing conditions two disulfide bonds are formed involving the reactive cysteines. Under reducing conditions zinc is bound to the reactive cysteines and the protein is inactive.

The protein resides in the cytoplasm. In terms of biological role, redox regulated molecular chaperone. Protects both thermally unfolding and oxidatively damaged proteins from irreversible aggregation. Plays an important role in the bacterial defense system toward oxidative stress. This Streptococcus pyogenes serotype M2 (strain MGAS10270) protein is 33 kDa chaperonin.